The chain runs to 291 residues: Porphobilinogen deaminase (291 aa).

S-(dipyrrolylmethanemethyl)cysteine is present on C238.

The protein belongs to the HMBS family. As to quaternary structure, monomer. It depends on dipyrromethane as a cofactor.

It catalyses the reaction 4 porphobilinogen + H2O = hydroxymethylbilane + 4 NH4(+). Its pathway is porphyrin-containing compound metabolism; protoporphyrin-IX biosynthesis; coproporphyrinogen-III from 5-aminolevulinate: step 2/4. Its function is as follows. Tetrapolymerization of the monopyrrole PBG into the hydroxymethylbilane pre-uroporphyrinogen in several discrete steps. This Clostridium beijerinckii (strain ATCC 51743 / NCIMB 8052) (Clostridium acetobutylicum) protein is Porphobilinogen deaminase.